A 724-amino-acid chain; its full sequence is Threonine--tRNA ligase 2, cytoplasmic (724 aa).

Ala2 is subject to N-acetylalanine. Residues 44–72 (QAEGPCLTREVAQLRAENRELRHCLYRLR) adopt a coiled-coil conformation. Residues 90-112 (RAEAGRAAAGAQPPPSQSLEEDV) form a disordered region. The 66-residue stretch at 155 to 220 (DSSNVITVRV…EGDATVELLT (66 aa)) folds into the TGS domain. A Phosphoserine modification is found at Ser451.

The protein belongs to the class-II aminoacyl-tRNA synthetase family. May be a component of the multisynthetase complex (MSC), a large multi-subunit complex which contains at least eight different aminoacyl-tRNA synthetases plus three auxillary subunits AIMP1, AIMP2 and EEF1E1. Interacts with the MSC components EPRS1, AIMP1, AIMP2 and KARS1.

The protein resides in the cytoplasm. It is found in the nucleus. The enzyme catalyses tRNA(Thr) + L-threonine + ATP = L-threonyl-tRNA(Thr) + AMP + diphosphate + H(+). In terms of biological role, catalyzes the attachment of threonine to tRNA(Thr) in a two-step reaction: threonine is first activated by ATP to form Thr-AMP and then transferred to the acceptor end of tRNA(Thr). Also edits incorrectly charged tRNA(Thr) via its editing domain, at the post-transfer stage. The sequence is that of Threonine--tRNA ligase 2, cytoplasmic (TARS3) from Bos taurus (Bovine).